The following is a 266-amino-acid chain: Phosphate import ATP-binding protein PstB 1 (266 aa).

Residues 18 to 261 form the ABC transporter domain; the sequence is AQTSNLSFYY…PTNQLTEQYV (244 aa). 50 to 57 is an ATP binding site; sequence GPSGCGKT.

It belongs to the ABC transporter superfamily. Phosphate importer (TC 3.A.1.7) family. As to quaternary structure, the complex is composed of two ATP-binding proteins (PstB), two transmembrane proteins (PstC and PstA) and a solute-binding protein (PstS).

The protein resides in the cell inner membrane. It carries out the reaction phosphate(out) + ATP + H2O = ADP + 2 phosphate(in) + H(+). Functionally, part of the ABC transporter complex PstSACB involved in phosphate import. Responsible for energy coupling to the transport system. This Gloeobacter violaceus (strain ATCC 29082 / PCC 7421) protein is Phosphate import ATP-binding protein PstB 1.